The primary structure comprises 78 residues: D-alanyl carrier protein (78 aa).

The region spanning 1 to 77 (MDLKEQIVEI…KVVAKVESLI (77 aa)) is the Carrier domain. Ser-35 is subject to O-(pantetheine 4'-phosphoryl)serine.

Belongs to the DltC family. In terms of processing, 4'-phosphopantetheine is transferred from CoA to a specific serine of apo-DCP.

The protein localises to the cytoplasm. The protein operates within cell wall biogenesis; lipoteichoic acid biosynthesis. Functionally, carrier protein involved in the D-alanylation of lipoteichoic acid (LTA). The loading of thioester-linked D-alanine onto DltC is catalyzed by D-alanine--D-alanyl carrier protein ligase DltA. The DltC-carried D-alanyl group is further transferred to cell membrane phosphatidylglycerol (PG) by forming an ester bond, probably catalyzed by DltD. D-alanylation of LTA plays an important role in modulating the properties of the cell wall in Gram-positive bacteria, influencing the net charge of the cell wall. The chain is D-alanyl carrier protein from Leuconostoc mesenteroides subsp. mesenteroides (strain ATCC 8293 / DSM 20343 / BCRC 11652 / CCM 1803 / JCM 6124 / NCDO 523 / NBRC 100496 / NCIMB 8023 / NCTC 12954 / NRRL B-1118 / 37Y).